A 680-amino-acid polypeptide reads, in one-letter code: MATTRYNSNDFRRQLGSPRPKGRADTKDTLCRNILIYGHCRYEDAGCAFNHDQTKKSPKPDATTRKTLNVDSAPFTPAVSSQPSKKTFSSSHAASAAVFTPRATAATPTGTPTAQETDIPPAANTPSAFSNIAAIREFTPQQQNYDLTTNGAAAATQDASLNYDPFTMSSVASALPAAQYNPYASTDHTGLVAHGGAYFPSAQAGYQSLIPPSFHLYAPIGPYREDLQPWQRSTYDFFMPENLRLELQNKSHAALQTMTGTAALQMPQVGNYHTLVTLDKTSNRKSSSLFGYVTWVYKAVSGKTSRLYSLRRLEGFTVSNDQILRPVKEWKKITNGNIVAMQDAFTTRAWGDSSLMFSFEYYPLAETLMEHHFPNAQHKTSFRSNTNHQASETVLWSYIVQISNALNSIHSNGLAARCIDATKIIITGKNHIRLSSCGILDVINYEKSKPMTELQEEDFVAFGKLIVSLATNTPPTGLNLGKAIEQMGRNHSSTLKDMVLWLLNPPQASGQKTVKNLVAGINEHVMTAFDAQQRQSDMLYSELYREVENGRVLRLLMKLATINERTEYDKDAGWSENGDRYMLKLFRDYVFHQVDAQGRPVLDPGHMLRCLSKLDVGTEERIKLTSRDCETDFLVTYKDLKGAVQSAFGELLKGSGNGRGGPVASGSGHGVHHPSHRDRF.

3 disordered regions span residues M1–T26, H51–T87, and F99–P120. The C3H1-type zinc finger occupies D25–T54. Basic and acidic residues predominate over residues D52–T64. A PABPC-interacting motif-2 (PAM-2) motif is present at residues A62 to Q82. A compositionally biased stretch (low complexity) spans F99 to T117. Residues Q256–N522 are pseudokinase domain. ATP contacts are provided by residues R311, E360–T367, and T422–K423. Residues E523–T561 are a coiled coil. The tract at residues I562–F680 is knob domain. The segment covering S655–H669 has biased composition (gly residues). Positions S655–F680 are disordered. Over residues G670–F680 the composition is skewed to basic residues.

The protein belongs to the protein kinase superfamily. PAN3 family. In terms of assembly, homodimer. Forms a heterotrimer with a catalytic subunit PAN2 to form the poly(A)-nuclease (PAN) deadenylation complex. Interacts (via PAM-2 motif) with poly(A)-binding protein PAB1 (via PABC domain), conferring substrate specificity of the enzyme complex.

The protein resides in the cytoplasm. Functionally, regulatory subunit of the poly(A)-nuclease (PAN) deadenylation complex, one of two cytoplasmic mRNA deadenylases involved in mRNA turnover. PAN specifically shortens poly(A) tails of RNA and the activity is stimulated by poly(A)-binding protein PAB1. PAN deadenylation is followed by rapid degradation of the shortened mRNA tails by the CCR4-NOT complex. Deadenylated mRNAs are then degraded by two alternative mechanisms, namely exosome-mediated 3'-5' exonucleolytic degradation, or deadenylation-dependent mRNA decaping and subsequent 5'-3' exonucleolytic degradation by XRN1. May also be involved in post-transcriptional maturation of mRNA poly(A) tails. PAN3 acts as a positive regulator for PAN activity, recruiting the catalytic subunit PAN2 to mRNA via its interaction with RNA and with PAB1. The sequence is that of PAN2-PAN3 deadenylation complex subunit PAN3 from Pyricularia oryzae (strain 70-15 / ATCC MYA-4617 / FGSC 8958) (Rice blast fungus).